The following is a 105-amino-acid chain: MDDSEFNALAEQALARIDAALEACDADLDFELAPGGVLEIEFADRSKIIVNRHSIAKEIWVAARAGGFHFRWDGASWRDTRDNAELMEKLSTLASQQAGEAIVLR.

This sequence belongs to the frataxin family.

Its function is as follows. Involved in iron-sulfur (Fe-S) cluster assembly. May act as a regulator of Fe-S biogenesis. This chain is Iron-sulfur cluster assembly protein CyaY, found in Dechloromonas aromatica (strain RCB).